The chain runs to 301 residues: Coiled-coil domain-containing protein 50 (301 aa).

The stretch at 57 to 131 forms a coiled coil; the sequence is QVAKQLQEEE…LQEEKKRKKH (75 aa). 3 stretches are compositionally biased toward basic and acidic residues: residues 123 to 142, 161 to 175, and 214 to 262; these read QEEK…KVYE, VYDK…SDAE, and AFKK…DKSS. 2 disordered regions span residues 123 to 175 and 214 to 301; these read QEEK…SDAE and AFKK…RRKQ.

Post-translationally, phosphorylated on tyrosine residues.

Functionally, involved in EGFR signaling. The protein is Coiled-coil domain-containing protein 50 (CCDC50) of Gallus gallus (Chicken).